A 476-amino-acid chain; its full sequence is Sulfate adenylyltransferase subunit 1 (476 aa).

The tr-type G domain maps to 24–239 (KSLLRFLTCG…LLETVDVDHE (216 aa)). The tract at residues 33 to 40 (GSVDDGKS) is G1. Residue 33 to 40 (GSVDDGKS) participates in GTP binding. Positions 91–95 (GITID) are G2. The segment at 112 to 115 (DTPG) is G3. Residues 112 to 116 (DTPGH) and 167 to 170 (NKMD) each bind GTP. Residues 167-170 (NKMD) form a G4 region. Residues 205–207 (SAL) are G5.

This sequence belongs to the TRAFAC class translation factor GTPase superfamily. Classic translation factor GTPase family. CysN/NodQ subfamily. Heterodimer composed of CysD, the smaller subunit, and CysN.

It catalyses the reaction sulfate + ATP + H(+) = adenosine 5'-phosphosulfate + diphosphate. The protein operates within sulfur metabolism; hydrogen sulfide biosynthesis; sulfite from sulfate: step 1/3. With CysD forms the ATP sulfurylase (ATPS) that catalyzes the adenylation of sulfate producing adenosine 5'-phosphosulfate (APS) and diphosphate, the first enzymatic step in sulfur assimilation pathway. APS synthesis involves the formation of a high-energy phosphoric-sulfuric acid anhydride bond driven by GTP hydrolysis by CysN coupled to ATP hydrolysis by CysD. This Vibrio campbellii (strain ATCC BAA-1116) protein is Sulfate adenylyltransferase subunit 1.